The sequence spans 374 residues: CC-adding tRNA nucleotidyltransferase (374 aa).

39-42 (GAVR) is a CTP binding site. Positions 52 and 54 each coordinate Mg(2+). CTP contacts are provided by residues 126-127 (RD), asparagine 131, 171-180 (DASRLVRAAR), and arginine 209.

Belongs to the tRNA nucleotidyltransferase/poly(A) polymerase family. Requires Mg(2+) as cofactor.

The enzyme catalyses a tRNA precursor + 2 CTP = a tRNA with a 3' CC end + 2 diphosphate. Functionally, tRNA nucleotidyltransferase involved in the synthesis of the tRNA CCA terminus. Adds the two cytidine residues to tRNA. This chain is CC-adding tRNA nucleotidyltransferase, found in Deinococcus radiodurans (strain ATCC 13939 / DSM 20539 / JCM 16871 / CCUG 27074 / LMG 4051 / NBRC 15346 / NCIMB 9279 / VKM B-1422 / R1).